Consider the following 805-residue polypeptide: Centrosomal protein of 85 kDa-like (805 aa).

Disordered stretches follow at residues 1–27 (MWGR…AGPD) and 50–89 (RNNH…LSFK). At Ser15 the chain carries Phosphoserine. Over residues 60–74 (ASDSGDTGIGTSCSD) the composition is skewed to polar residues. Ser207 carries the phosphoserine modification. Positions 439 to 682 (SQQGEFEQKL…LENQRQTDET (244 aa)) form a coiled coil.

It belongs to the CEP85 family. In terms of tissue distribution, isoform 1 and isoform 4 are expressed in spleen, lymph, thymus, tonsil and peripheral blood leukocytes, with isoform 1 expressed at higher levels. Isoform 4 is detected in K-562 leukemia cells and in the blood of precursor T lymphoblastic lymphoma (T-ALL) patients.

It is found in the cytoplasm. It localises to the cytoskeleton. The protein localises to the microtubule organizing center. The protein resides in the centrosome. Its function is as follows. Plays an essential role in neuronal cell migration. In Homo sapiens (Human), this protein is Centrosomal protein of 85 kDa-like.